The chain runs to 309 residues: Protein MAK16 homolog (309 aa).

A disordered region spans residues 194–309; the sequence is EADQFSEEEA…IEEETENQAN (116 aa). Composition is skewed to acidic residues over residues 195–227 and 235–270; these read ADQF…DIED and VEGD…DDEE. The span at 275 to 293 shows a compositional bias: basic residues; the sequence is ITKKRGPTFKPTKKTPQKR. Residues 299-309 are compositionally biased toward acidic residues; the sequence is EIEEETENQAN.

This sequence belongs to the MAK16 family.

The protein resides in the nucleus. The protein localises to the nucleolus. This chain is Protein MAK16 homolog (mak16l), found in Dictyostelium discoideum (Social amoeba).